Reading from the N-terminus, the 235-residue chain is U1 small nuclear ribonucleoprotein C (235 aa).

The segment at 4–36 adopts a Matrin-type zinc-finger fold; sequence YYCEYCDIYLTHSSPVGRRQHIHGRKHISAKIE. The interval 131 to 235 is disordered; it reads QAHNNYSYPN…SKEHIESDIS (105 aa). Residues 134–168 show a composition bias toward low complexity; it reads NNYSYPNSINPSNQINYSNNYGSNNFNNSNEFNKN. Residues 169–189 show a composition bias toward basic and acidic residues; the sequence is MNEKDNINNNDIHDNKVKTDE. A compositionally biased stretch (low complexity) spans 192–203; the sequence is PINNDNLNNTRN. Basic and acidic residues-rich tracts occupy residues 205 to 217 and 225 to 235; these read SYEE…DHKK and NSKEHIESDIS.

This sequence belongs to the U1 small nuclear ribonucleoprotein C family. U1 snRNP is composed of the 7 core Sm proteins B/B', D1, D2, D3, E, F and G that assemble in a heptameric protein ring on the Sm site of the small nuclear RNA to form the core snRNP, and at least 3 U1 snRNP-specific proteins U1-70K, U1-A and U1-C. U1-C interacts with U1 snRNA and the 5' splice-site region of the pre-mRNA.

It localises to the nucleus. Its function is as follows. Component of the spliceosomal U1 snRNP, which is essential for recognition of the pre-mRNA 5' splice-site and the subsequent assembly of the spliceosome. U1-C is directly involved in initial 5' splice-site recognition for both constitutive and regulated alternative splicing. The interaction with the 5' splice-site seems to precede base-pairing between the pre-mRNA and the U1 snRNA. Stimulates commitment or early (E) complex formation by stabilizing the base pairing of the 5' end of the U1 snRNA and the 5' splice-site region. In Plasmodium falciparum (isolate 3D7), this protein is U1 small nuclear ribonucleoprotein C.